Here is a 776-residue protein sequence, read N- to C-terminus: K(+) efflux antiporter 3, chloroplastic (776 aa).

The transit peptide at 1-72 (MAISTMLGSI…KVFLDTSKRF (72 aa)) directs the protein to the chloroplast. Over 73–93 (YFQGRWSESSGRRVETYAGVD) the chain is Lumenal, thylakoid. A helical transmembrane segment spans residues 94 to 114 (VASAVDVINDLGFDTLTFLMV). A topological domain (stromal) is located at residue Thr115. A helical transmembrane segment spans residues 116-136 (VIIVPAFRILKASPILGFFFA). Residues 137–153 (GVVLNQFGLIRNLTDVK) are Lumenal, thylakoid-facing. Residues 154-174 (VLSEWGILFLLFEMGLELSLA) traverse the membrane as a helical segment. Residues 175–181 (RLKALAK) lie on the Stromal side of the membrane. Residues 182–202 (FAFGMGLTQVLLCTAAFTAFE) traverse the membrane as a helical segment. Topologically, residues 203-232 (LPPNGAIGTKILEFLFHSRPDLVNIRSIDE) are lumenal, thylakoid. Residues 233-253 (AVVIGAALSLSSSAFVLQLLA) form a helical membrane-spanning segment. Over 254–266 (EKGELPTRFGSAT) the chain is Stromal. A helical membrane pass occupies residues 267-287 (LGILLLQDIAVVPLLVILPVL). The Lumenal, thylakoid segment spans residues 288 to 296 (ESQDIGGES). The chain crosses the membrane as a helical span at residues 297–317 (IWPMLAKESAKALGGLGILSL). Over 318-338 (GGKFFLRRIFEVVAETRSSEA) the chain is Stromal. Residues 339 to 359 (FVALCLLTVAGTSLVTQWLGF) form a helical membrane-spanning segment. Topologically, residues 360-389 (SDTLGAFLAGALLAETNFRTQIEADIRPFR) are lumenal, thylakoid. The chain crosses the membrane as a helical span at residues 390-410 (GLLLGLFFVTTGTSIDMEVLF). At 411 to 415 (REWPN) the chain is on the stromal side. The chain crosses the membrane as a helical span at residues 416 to 436 (VLSLLGGLIVIKTLIITAIGP). The Lumenal, thylakoid segment spans residues 437-445 (RVGLTIQES). A helical membrane pass occupies residues 446-466 (VRVGFLLSQGGEFAFVVFSLA). The Stromal portion of the chain corresponds to 467–468 (NR). Residues 469–489 (LGVLPNELNKLLIIVVVLSMA) traverse the membrane as a helical segment. At 490 to 526 (LTPYLNQLGRKAADFLDERLDPGEKIGEDVNFDVSES) the chain is on the lumenal, thylakoid side. In terms of domain architecture, RCK N-terminal spans 524-649 (SESIVIIGFG…KKAGATDAIL (126 aa)). A helical membrane pass occupies residues 527-547 (IVIIGFGQMGQVLANFLSTPL). Residues 548–776 (VSDSDLVGWP…FVGKADKAQD (229 aa)) lie on the Stromal side of the membrane. The segment at 728–776 (MQMKASDSNSDSAAEILQETAGLSQPPEIDDSSVNIDNGFVGKADKAQD) is disordered.

It belongs to the monovalent cation:proton antiporter 2 (CPA2) transporter (TC 2.A.37) family. KEA (TC 2.A.37.1) subfamily. As to expression, expressed at low levels in flowers, siliques and leaves. Expressed at low levels in flowers and leaves. In terms of tissue distribution, most abundant splice form in all organs, including siliques, flowers, leaves and roots. Preferentially expressed in photosynthetically active tissues, including seedling cotyledons and mature leaves. As to expression, expressed in shoots and roots.

The protein localises to the plastid. It is found in the chloroplast membrane. It localises to the golgi apparatus membrane. Its subcellular location is the chloroplast thylakoid membrane. The enzyme catalyses K(+)(in) + H(+)(out) = K(+)(out) + H(+)(in). Regulated by a mechanism involving lumenal C-terminus region; a fine-tuned balance between photoprotective energy dissipation in high light and a maximum quantum yield in low light involves a reduced activity under high light. Functionally, electroneutral K(+)/H(+) efflux antiporter assuring proton efflux from the thylakoid lumen to the plastid stroma, thus increasing the membrane potential at the expense of the proton gradient (delta pH) component of the proton motive force (PMF). Promotes photosynthesis and growth in conditions where the chloroplast (cp)ATP synthase activity is low (e.g. cgl160 mutant background) by reducing the pH gradient across the thylakoid membrane. Accelerates photosynthetic acclimation in fluctuating light environments by modulating two components of the proton motive force, the proton gradient and the electric potential (delta Psi). Promotes the relaxation of photoprotective energy-dependent non-photochemical quenching (NPQ) after transitions from high to low light, thus enhancing photosystem II (PSII) quantum efficiency in fluctuating light. On transition from high to low light, slows down photoprotection by dissipating the pH gradient across the thylakoid membrane. During photosynthetic response on transition from dark to low light, involved in a sequential mechanism of adaptation; VCCN1 and CLCe first trigger the activation of photoprotection, which is later down-regulated by KEA3 to a low steady state, while adjusting electron transport. Together with the chloroplast NADH dehydrogenase-like (NDH) complex, maximizes photosynthesis efficiency after a long dark adaptation. Required in roots for rapid hyperosmotic-induced Ca(2+) responses and for osmo-sensory potentiation in hyperosmotic conditions. Its function is as follows. Low K(+)/H(+) efflux antiporter activity. Low K(+)/H(+) efflux antiporter activity. Promotes non-photochemical quenching (NPQ) in high light conditions. This Arabidopsis thaliana (Mouse-ear cress) protein is K(+) efflux antiporter 3, chloroplastic.